A 75-amino-acid chain; its full sequence is Lipid-anchored plasma membrane protein CPP2 (75 aa).

The tract at residues 1–43 (MSQQQGYYQQGPPQQGYYQQGPPQQGYYQQGPPQQGYPQQQPV) is disordered. Tandem repeats lie at residues 4–13 (QQGYYQQGPP), 14–23 (QQGYYQQGPP), and 24–33 (QQGYYQQGPP). The 3 X 10 AA tandem repeats of Q-Q-G-Y-Y-Q-Q-G-P-P stretch occupies residues 4–33 (QQGYYQQGPPQQGYYQQGPPQQGYYQQGPP).

It belongs to the CYSTM1 family. Post-translationally, palmitoylated near the C-terminus.

It localises to the cell membrane. The sequence is that of Lipid-anchored plasma membrane protein CPP2 from Saccharomyces cerevisiae (strain ATCC 204508 / S288c) (Baker's yeast).